Here is a 118-residue protein sequence, read N- to C-terminus: Small ribosomal subunit protein uS13 (118 aa).

Residues 94 to 118 form a disordered region; that stretch reads SLPLRGQRTKTNARTRKGPRKPIKR.

This sequence belongs to the universal ribosomal protein uS13 family. In terms of assembly, part of the 30S ribosomal subunit. Forms a loose heterodimer with protein S19. Forms two bridges to the 50S subunit in the 70S ribosome.

Functionally, located at the top of the head of the 30S subunit, it contacts several helices of the 16S rRNA. In the 70S ribosome it contacts the 23S rRNA (bridge B1a) and protein L5 of the 50S subunit (bridge B1b), connecting the 2 subunits; these bridges are implicated in subunit movement. Contacts the tRNAs in the A and P-sites. The polypeptide is Small ribosomal subunit protein uS13 (Pseudoalteromonas translucida (strain TAC 125)).